We begin with the raw amino-acid sequence, 164 residues long: S-ribosylhomocysteine lyase (164 aa).

The Fe cation site is built by His-54, His-58, and Cys-128.

Belongs to the LuxS family. Homodimer. It depends on Fe cation as a cofactor.

It carries out the reaction S-(5-deoxy-D-ribos-5-yl)-L-homocysteine = (S)-4,5-dihydroxypentane-2,3-dione + L-homocysteine. Involved in the synthesis of autoinducer 2 (AI-2) which is secreted by bacteria and is used to communicate both the cell density and the metabolic potential of the environment. The regulation of gene expression in response to changes in cell density is called quorum sensing. Catalyzes the transformation of S-ribosylhomocysteine (RHC) to homocysteine (HC) and 4,5-dihydroxy-2,3-pentadione (DPD). This is S-ribosylhomocysteine lyase from Campylobacter jejuni subsp. jejuni serotype O:6 (strain 81116 / NCTC 11828).